Here is a 448-residue protein sequence, read N- to C-terminus: Tryptamine benzoyltransferase 2 (448 aa).

The interval 1-20 (MEITSSAMLKPAPTPTPHPL) is disordered. Catalysis depends on proton acceptor residues His-155 and Asp-386.

It belongs to the plant acyltransferase family.

Functionally, hydroxycinnamoyl transferase that catalyzes the transfer of an acyl from benzoyl-CoA to tryptamine, to produce benzoyl tryptamine. Serotonin and tyramine serve as acyl acceptors in vitro. Specific for benzoyl-CoA as acyl donor. Has no activity with p-coumaroyl-CoA, caffeoyl-CoA, or feruloyl-CoA as acyl donors. The sequence is that of Tryptamine benzoyltransferase 2 from Oryza sativa subsp. japonica (Rice).